Here is a 206-residue protein sequence, read N- to C-terminus: Shieldin complex subunit 1 (206 aa).

Polar residues-rich tracts occupy residues 1–15 (MATQETTPGSQTEES), 33–43 (RPSQQTNSEAF), and 60–69 (DSSNLNTEQN). Disordered regions lie at residues 1-21 (MATQETTPGSQTEESNALDLP) and 33-69 (RPSQQTNSEAFSSEEACSIPCSSDVDPDSSNLNTEQN).

Component of the shieldin complex, consisting of SHLD1, SHLD2, SHLD3 and MAD2L2/REV7. Within the complex, SHLD2 forms a scaffold which interacts with a SHLD3-MAD2L2 subcomplex via its N-terminus, and with SHLD1 via its C-terminus. Interacts with ASTE1.

The protein localises to the chromosome. In terms of biological role, component of the shieldin complex, which plays an important role in repair of DNA double-stranded breaks (DSBs). During G1 and S phase of the cell cycle, the complex functions downstream of TP53BP1 to promote non-homologous end joining (NHEJ) and suppress DNA end resection. Mediates various NHEJ-dependent processes including immunoglobulin class-switch recombination, and fusion of unprotected telomeres. This Bos taurus (Bovine) protein is Shieldin complex subunit 1.